The sequence spans 92 residues: U21-hexatoxin-Hi1a (92 aa).

The N-terminal stretch at 1–19 is a signal peptide; that stretch reads MKTILSMLIFVALFAAIVG. 4 cysteine pairs are disulfide-bonded: Cys41–Cys55, Cys48–Cys67, Cys54–Cys82, and Cys85–Cys92.

Belongs to the neurotoxin 21 family. Expressed by the venom gland.

It localises to the secreted. Functionally, potent insecticidal toxin with probable ion channel impairing activity. In vivo, reversibly paralyzes all flies within 30 minutes, even at low dose (0.3 nmol/g). This is U21-hexatoxin-Hi1a from Hadronyche infensa (Fraser island funnel-web spider).